A 178-amino-acid chain; its full sequence is Protein GrpE (178 aa).

The span at 1–11 (MENTQENPTDQ) shows a compositional bias: polar residues. The segment at 1-31 (MENTQENPTDQTTEETGREAQAAENAAPAAE) is disordered. Positions 19–31 (EAQAAENAAPAAE) are enriched in low complexity.

Belongs to the GrpE family. Homodimer.

Its subcellular location is the cytoplasm. Participates actively in the response to hyperosmotic and heat shock by preventing the aggregation of stress-denatured proteins, in association with DnaK and GrpE. It is the nucleotide exchange factor for DnaK and may function as a thermosensor. Unfolded proteins bind initially to DnaJ; upon interaction with the DnaJ-bound protein, DnaK hydrolyzes its bound ATP, resulting in the formation of a stable complex. GrpE releases ADP from DnaK; ATP binding to DnaK triggers the release of the substrate protein, thus completing the reaction cycle. Several rounds of ATP-dependent interactions between DnaJ, DnaK and GrpE are required for fully efficient folding. This chain is Protein GrpE, found in Burkholderia thailandensis (strain ATCC 700388 / DSM 13276 / CCUG 48851 / CIP 106301 / E264).